A 149-amino-acid polypeptide reads, in one-letter code: Deoxyuridine 5'-triphosphate nucleotidohydrolase (149 aa).

Substrate-binding positions include 68 to 70, Asn-81, and 85 to 87; these read RSG and LID.

The protein belongs to the dUTPase family. Requires Mg(2+) as cofactor.

The catalysed reaction is dUTP + H2O = dUMP + diphosphate + H(+). The protein operates within pyrimidine metabolism; dUMP biosynthesis; dUMP from dCTP (dUTP route): step 2/2. Functionally, this enzyme is involved in nucleotide metabolism: it produces dUMP, the immediate precursor of thymidine nucleotides and it decreases the intracellular concentration of dUTP so that uracil cannot be incorporated into DNA. This chain is Deoxyuridine 5'-triphosphate nucleotidohydrolase, found in Azoarcus sp. (strain BH72).